Reading from the N-terminus, the 99-residue chain is Large ribosomal subunit protein uL23 (99 aa).

Belongs to the universal ribosomal protein uL23 family. In terms of assembly, part of the 50S ribosomal subunit. Contacts protein L29, and trigger factor when it is bound to the ribosome.

Functionally, one of the early assembly proteins it binds 23S rRNA. One of the proteins that surrounds the polypeptide exit tunnel on the outside of the ribosome. Forms the main docking site for trigger factor binding to the ribosome. This Stutzerimonas stutzeri (strain A1501) (Pseudomonas stutzeri) protein is Large ribosomal subunit protein uL23.